The primary structure comprises 690 residues: Methionine--tRNA ligase 1 (690 aa).

Residues Pro11 to His21 carry the 'HIGH' region motif. 4 residues coordinate Zn(2+): Cys142, Cys145, Cys155, and Cys158. The 'KMSKS' region motif lies at Lys328–Ser332. Lys331 serves as a coordination point for ATP. The 101-residue stretch at Asp590–His690 folds into the tRNA-binding domain.

Belongs to the class-I aminoacyl-tRNA synthetase family. MetG type 1 subfamily. Homodimer. It depends on Zn(2+) as a cofactor.

The protein localises to the cytoplasm. The catalysed reaction is tRNA(Met) + L-methionine + ATP = L-methionyl-tRNA(Met) + AMP + diphosphate. In terms of biological role, is required not only for elongation of protein synthesis but also for the initiation of all mRNA translation through initiator tRNA(fMet) aminoacylation. This chain is Methionine--tRNA ligase 1, found in Sorangium cellulosum (strain So ce56) (Polyangium cellulosum (strain So ce56)).